The chain runs to 134 residues: Translation initiation factor 5A (134 aa).

Lysine 36 is modified (hypusine).

It belongs to the eIF-5A family.

Its subcellular location is the cytoplasm. Functionally, functions by promoting the formation of the first peptide bond. The sequence is that of Translation initiation factor 5A (eIF5A) from Korarchaeum cryptofilum (strain OPF8).